Consider the following 2542-residue polypeptide: Highly reducing polyketide synthase (2542 aa).

In terms of domain architecture, Ketosynthase family 3 (KS3) spans 7 to 435 (PEPIAIVGMA…GANAHAILDA (429 aa)). Active-site for beta-ketoacyl synthase activity residues include C182, H317, and H357. A Malonyl-CoA:ACP transacylase (MAT) domain is found at 545 to 872 (FVFTGQGAQW…NLVGSLFLSG (328 aa)). Residues 927 to 1062 (HDLLGSRIPG…TTNETLRINS (136 aa)) are N-terminal hotdog fold. Residues 927–1224 (HDLLGSRIPG…FLSLETATKE (298 aa)) form the PKS/mFAS DH domain. The active-site Proton acceptor; for dehydratase activity is the H959. Positions 1072–1224 (NKDSYVRRWY…FLSLETATKE (153 aa)) are C-terminal hotdog fold. The active-site Proton donor; for dehydratase activity is the D1137. A methyltransferase (CMet) domain region spans residues 1275 to 1574 (LTQLAIRSVV…AGADIMLDDY (300 aa)). The disordered stretch occupies residues 1606 to 1634 (VNGTNGINSTNSVNVTNDTSGINDTNRMN). One can recognise an Enoyl reductase (ER) domain in the interval 1866 to 2186 (GKANSFYFES…QGDSVGSVVL (321 aa)). Positions 2209–2389 (ASYLLVGCLG…QAMSMALGMI (181 aa)) constitute a Ketoreductase (KR) domain.

It depends on pantetheine 4'-phosphate as a cofactor.

It functions in the pathway antifungal biosynthesis. Functionally, highly reducing polyketide synthase; part of the gene cluster that mediates the biosynthesis of the tetrahydropyranyl antifungal agent lanomycin that acts as an inhibitor of CYP51 and blocks the ergosterol biosynthesis. The biosynthesis probably begins with the formation of an hexaketide, followed by methionine mediated alkylation of C-2 and C-6, and methylation of the reduced C-3 oxygen, pyran forming reductive ring closure, oxygenation of C-4, beta-keto reduction, enoyl reduction and dehydration of the remaining oxygens, and finally, acylation with glycine to complete the biosynthesis. The sequence is that of Highly reducing polyketide synthase from Pyrenophora dematioidea (Helminthosporium dematioideum).